A 639-amino-acid polypeptide reads, in one-letter code: Tetracycline resistance protein TetM from transposon Tn5251 (639 aa).

The tr-type G domain maps to 1–242 (MKIINIGVLA…VITNKFYSST (242 aa)). Residues 10 to 17 (AHVDAGKT), 74 to 78 (DTPGH), and 128 to 131 (NKID) each bind GTP.

Belongs to the TRAFAC class translation factor GTPase superfamily. Classic translation factor GTPase family. TetM/TetO subfamily.

Its function is as follows. Abolishes the inhibitory effect of tetracyclin on protein synthesis by a non-covalent modification of the ribosomes. The protein is Tetracycline resistance protein TetM from transposon Tn5251 (tetM(5251)) of Streptococcus pneumoniae.